The following is a 429-amino-acid chain: Chaperone SurA (429 aa).

A signal peptide spans 1 to 18 (MFKRIALVCALFSGVCFA). PpiC domains are found at residues 170–271 (NLTY…KLVA) and 281–380 (ITQT…EVIA).

The protein localises to the periplasm. The enzyme catalyses [protein]-peptidylproline (omega=180) = [protein]-peptidylproline (omega=0). Its function is as follows. Chaperone involved in the correct folding and assembly of outer membrane proteins. Recognizes specific patterns of aromatic residues and the orientation of their side chains, which are found more frequently in integral outer membrane proteins. May act in both early periplasmic and late outer membrane-associated steps of protein maturation. In Legionella pneumophila subsp. pneumophila (strain Philadelphia 1 / ATCC 33152 / DSM 7513), this protein is Chaperone SurA.